A 139-amino-acid polypeptide reads, in one-letter code: Aspartate 1-decarboxylase (139 aa).

Ser25 functions as the Schiff-base intermediate with substrate; via pyruvic acid in the catalytic mechanism. Pyruvic acid (Ser) is present on Ser25. A substrate-binding site is contributed by Thr57. The active-site Proton donor is Tyr58. Residue Gly73–Ala75 coordinates substrate. The segment at Glu116–Ala139 is disordered. Polar residues predominate over residues Gly129–Ala139.

The protein belongs to the PanD family. In terms of assembly, heterooctamer of four alpha and four beta subunits. Pyruvate serves as cofactor. Post-translationally, is synthesized initially as an inactive proenzyme, which is activated by self-cleavage at a specific serine bond to produce a beta-subunit with a hydroxyl group at its C-terminus and an alpha-subunit with a pyruvoyl group at its N-terminus.

Its subcellular location is the cytoplasm. The enzyme catalyses L-aspartate + H(+) = beta-alanine + CO2. The protein operates within cofactor biosynthesis; (R)-pantothenate biosynthesis; beta-alanine from L-aspartate: step 1/1. Catalyzes the pyruvoyl-dependent decarboxylation of aspartate to produce beta-alanine. This is Aspartate 1-decarboxylase from Nocardia farcinica (strain IFM 10152).